The chain runs to 506 residues: Apolipoprotein N-acyltransferase (506 aa).

6 helical membrane-spanning segments follow: residues 24 to 44, 58 to 78, 85 to 105, 125 to 145, 162 to 182, and 192 to 212; these read LALA…MFYL, GWCY…VSIH, ALLA…FFAL, LAFA…LTGF, LAPV…AALL, and KSFL…GLAL. The 241-residue stretch at 230 to 470 folds into the CN hydrolase domain; the sequence is MQGNIEQSMK…RGVLYGEVVP (241 aa). Glu269 acts as the Proton acceptor in catalysis. Lys330 is an active-site residue. Cys382 functions as the Nucleophile in the catalytic mechanism. Residues 482–502 traverse the membrane as a helical segment; sequence SWPLAIVCLLLFGWALLAARI.

It belongs to the CN hydrolase family. Apolipoprotein N-acyltransferase subfamily.

It localises to the cell inner membrane. The enzyme catalyses N-terminal S-1,2-diacyl-sn-glyceryl-L-cysteinyl-[lipoprotein] + a glycerophospholipid = N-acyl-S-1,2-diacyl-sn-glyceryl-L-cysteinyl-[lipoprotein] + a 2-acyl-sn-glycero-3-phospholipid + H(+). The protein operates within protein modification; lipoprotein biosynthesis (N-acyl transfer). Its function is as follows. Catalyzes the phospholipid dependent N-acylation of the N-terminal cysteine of apolipoprotein, the last step in lipoprotein maturation. In Pseudomonas syringae pv. tomato (strain ATCC BAA-871 / DC3000), this protein is Apolipoprotein N-acyltransferase.